A 59-amino-acid polypeptide reads, in one-letter code: Large ribosomal subunit protein bL32 (59 aa).

Positions 1-21 (MAVPKKKSSKSKGRSRAAHHA) are disordered.

It belongs to the bacterial ribosomal protein bL32 family.

This Magnetococcus marinus (strain ATCC BAA-1437 / JCM 17883 / MC-1) protein is Large ribosomal subunit protein bL32.